Consider the following 444-residue polypeptide: Tol-Pal system protein TolB (444 aa).

An N-terminal signal peptide occupies residues 1 to 19 (MRNIIYFILSLLFSVTSYA).

Belongs to the TolB family. In terms of assembly, the Tol-Pal system is composed of five core proteins: the inner membrane proteins TolA, TolQ and TolR, the periplasmic protein TolB and the outer membrane protein Pal. They form a network linking the inner and outer membranes and the peptidoglycan layer.

The protein localises to the periplasm. Functionally, part of the Tol-Pal system, which plays a role in outer membrane invagination during cell division and is important for maintaining outer membrane integrity. This Rickettsia africae (strain ESF-5) protein is Tol-Pal system protein TolB.